Reading from the N-terminus, the 74-residue chain is Translational regulator CsrA (74 aa).

This sequence belongs to the CsrA/RsmA family. Homodimer. The beta-strands of each monomer intercalate to form a hydrophobic core while the alpha-helices form wings that extend away from the core. Two molecules of FliW interact with 1 homodimer. mRNA and FliW bind to different sites on CsrA.

It localises to the cytoplasm. Functionally, a translational regulator that binds mRNA to regulate translation initiation and/or mRNA stability. Usually binds in the 5'-UTR at or near the Shine-Dalgarno sequence preventing ribosome-binding, thus repressing translation. Represses expression of flagellin (hag) in a post-transcriptional fashion. Specifically binds to 2 sites in the 5'-UTR of hag mRNA in a cooperative fashion; the second site overlaps the Shine-Dalgarno sequence and prevents 30S ribosomal subunit binding. Mutation of either binding site abolishes CsrA regulation of hag expression. Repression is greater in the 1A96 than 168 genetic background and higher in minimal than rich medium. Translation repression is antagonized by FliW. Partner switching by flagellin between FliW and CsrA provides a flagellar assembly checkpoint to tightly control the timing of flagellin synthesis. Flagellin binds to assembly factor FliW, freeing CsrA to repress translation of the flagellin mRNA. When the flagellar hook is assembled flagellin is secreted, depleting intracellular flagellin, which frees FliW to interact with CsrA and inhibits CsrA binding to mRNA. This derepresses flagellin translation and provides protein for flagellar assembly. Once the flagellar filament is completed cytoplasmic flagellin levels rise and CsrA translation repression of flagellin reinitiates. Overexpression leads to a dramatic reduction in motility, a significant reduction in flagellin synthesis and reduced flagella assembly. This is Translational regulator CsrA from Bacillus subtilis (strain 168).